The primary structure comprises 614 residues: Aspartate--tRNA ligase (614 aa).

Residue Glu-174 coordinates L-aspartate. The interval 198-201 (QLFK) is aspartate. Arg-220 contributes to the L-aspartate binding site. Residues 220–222 (RDE) and Gln-229 each bind ATP. His-448 provides a ligand contact to L-aspartate. ATP is bound at residue Glu-482. Arg-489 lines the L-aspartate pocket. Residue 534–537 (GLDR) participates in ATP binding.

It belongs to the class-II aminoacyl-tRNA synthetase family. Type 1 subfamily. Homodimer.

It is found in the cytoplasm. The enzyme catalyses tRNA(Asp) + L-aspartate + ATP = L-aspartyl-tRNA(Asp) + AMP + diphosphate. Functionally, catalyzes the attachment of L-aspartate to tRNA(Asp) in a two-step reaction: L-aspartate is first activated by ATP to form Asp-AMP and then transferred to the acceptor end of tRNA(Asp). This chain is Aspartate--tRNA ligase, found in Lactobacillus acidophilus (strain ATCC 700396 / NCK56 / N2 / NCFM).